Here is a 423-residue protein sequence, read N- to C-terminus: Salicylate 5-hydroxylase, large oxygenase component (423 aa).

The tract at residues 1–20 (MSEPQRLKPVFPQDPKWPGE) is disordered. Residues 49-168 (WCYVGLEAEI…VAARGGAVFA (120 aa)) form the Rieske domain. [2Fe-2S] cluster is bound by residues Cys-91, His-93, Cys-111, and His-114. Fe cation-binding residues include His-224, His-229, and Asp-370.

Belongs to the bacterial ring-hydroxylating dioxygenase alpha subunit family. As to quaternary structure, the salicylate 5-hydroxylase (S5H) multicomponent enzyme system is composed of an electron transfer component and an oxygenase component. The electron transfer component is comprised of a ferredoxin reductase (NagAa) and a ferredoxin (NagAb), and the oxygenase component is formed by a large subunit (NagG) and a small subunit (NagH). It depends on Fe cation as a cofactor. [2Fe-2S] cluster is required as a cofactor.

The enzyme catalyses salicylate + NADH + O2 + H(+) = 2,5-dihydroxybenzoate + NAD(+) + H2O. It functions in the pathway aromatic compound metabolism; naphthalene degradation. In terms of biological role, oxygenase component of the salicylate 5-hydroxylase (S5H) multicomponent enzyme system which catalyzes the 5-hydroxylation of salicylate to gentisate. Active only on substrates with a ring-substituted carboxylate group with an adjacent hydroxyl group. Primarily active against salicylate and substituted salicylates, but not against 2-hydroxycinnamate, 3-hydroxycinnamate, 2-hydroxyphenylacetate, 3-hydroxyphenylacetate, 2-hydroxybenzophenone, 1-hydroxy-2-naphthoate, 4-methoxysalicylate or 2-hydroxyacetophenone. This Ralstonia sp protein is Salicylate 5-hydroxylase, large oxygenase component.